Consider the following 382-residue polypeptide: Mitogen-activated protein kinase 9 (382 aa).

The region spanning 26–321 (YQQLKPIGSG…VDEALRHPYI (296 aa)) is the Protein kinase domain. Residues 33–38 (GSGAQG) and lysine 55 each bind ATP. Aspartate 151 (proton acceptor) is an active-site residue. Residue threonine 183 is modified to Phosphothreonine. The TXY motif lies at 183–185 (TPY). Phosphotyrosine is present on tyrosine 185.

This sequence belongs to the protein kinase superfamily. CMGC Ser/Thr protein kinase family. MAP kinase subfamily. Requires Mg(2+) as cofactor. In terms of processing, dually phosphorylated on Thr-183 and Tyr-185, which activates the enzyme. As to expression, expressed in the neuroepithelium of developing brain at stages 16 to 26.

The enzyme catalyses L-seryl-[protein] + ATP = O-phospho-L-seryl-[protein] + ADP + H(+). It carries out the reaction L-threonyl-[protein] + ATP = O-phospho-L-threonyl-[protein] + ADP + H(+). Its activity is regulated as follows. Activated by threonine and tyrosine phosphorylation. Its function is as follows. Responds to activation by environmental stress and pro-inflammatory cytokines by phosphorylating a number of transcription factors, primarily components of AP-1 such as JUN and ATF2 and thus regulates AP-1 transcriptional activity. May play a role in the development of the central nervous system during embryogenesis. May play a role in the regulation of the circadian clock. This chain is Mitogen-activated protein kinase 9 (MAPK9), found in Gallus gallus (Chicken).